A 674-amino-acid chain; its full sequence is DNA ligase (674 aa).

NAD(+)-binding positions include aspartate 34–aspartate 38, serine 83–leucine 84, and glutamate 117. Lysine 119 serves as the catalytic N6-AMP-lysine intermediate. Residues arginine 140, glutamate 184, lysine 297, and lysine 321 each coordinate NAD(+). Positions 415, 418, 433, and 439 each coordinate Zn(2+). The 77-residue stretch at leucine 598 to leucine 674 folds into the BRCT domain.

It belongs to the NAD-dependent DNA ligase family. LigA subfamily. Mg(2+) serves as cofactor. Requires Mn(2+) as cofactor.

It carries out the reaction NAD(+) + (deoxyribonucleotide)n-3'-hydroxyl + 5'-phospho-(deoxyribonucleotide)m = (deoxyribonucleotide)n+m + AMP + beta-nicotinamide D-nucleotide.. Its function is as follows. DNA ligase that catalyzes the formation of phosphodiester linkages between 5'-phosphoryl and 3'-hydroxyl groups in double-stranded DNA using NAD as a coenzyme and as the energy source for the reaction. It is essential for DNA replication and repair of damaged DNA. This Chlorobaculum parvum (strain DSM 263 / NCIMB 8327) (Chlorobium vibrioforme subsp. thiosulfatophilum) protein is DNA ligase.